A 289-amino-acid chain; its full sequence is Minor capsid protein P10 (289 aa).

The tract at residues 1–21 (MMNFILVLLIVAMIGTILVSE) is hydrophobic.

Interacts with the major capsid protein.

Its subcellular location is the virion. One of the minor capsid proteins that constitute a network internal to the major capsid proteins and outside the lipid membrane. The minor capsid proteins glue and stabilize the capsomers. This Chlorella (PBCV-1) protein is Minor capsid protein P10.